The primary structure comprises 226 residues: Deoxyribose-phosphate aldolase (226 aa).

The active-site Proton donor/acceptor is the Asp96. The active-site Schiff-base intermediate with acetaldehyde is Lys157. Lys185 acts as the Proton donor/acceptor in catalysis.

It belongs to the DeoC/FbaB aldolase family. DeoC type 1 subfamily.

It localises to the cytoplasm. The catalysed reaction is 2-deoxy-D-ribose 5-phosphate = D-glyceraldehyde 3-phosphate + acetaldehyde. Its pathway is carbohydrate degradation; 2-deoxy-D-ribose 1-phosphate degradation; D-glyceraldehyde 3-phosphate and acetaldehyde from 2-deoxy-alpha-D-ribose 1-phosphate: step 2/2. In terms of biological role, catalyzes a reversible aldol reaction between acetaldehyde and D-glyceraldehyde 3-phosphate to generate 2-deoxy-D-ribose 5-phosphate. The polypeptide is Deoxyribose-phosphate aldolase (Trichormus variabilis (strain ATCC 29413 / PCC 7937) (Anabaena variabilis)).